Here is a 342-residue protein sequence, read N- to C-terminus: Ribosomal RNA small subunit methyltransferase C (342 aa).

This sequence belongs to the methyltransferase superfamily. RsmC family. As to quaternary structure, monomer.

Its subcellular location is the cytoplasm. The enzyme catalyses guanosine(1207) in 16S rRNA + S-adenosyl-L-methionine = N(2)-methylguanosine(1207) in 16S rRNA + S-adenosyl-L-homocysteine + H(+). In terms of biological role, specifically methylates the guanine in position 1207 of 16S rRNA in the 30S particle. This chain is Ribosomal RNA small subunit methyltransferase C, found in Enterobacter sp. (strain 638).